The chain runs to 349 residues: Short chain dehydrogenase/reductase dpfgH (349 aa).

A helical membrane pass occupies residues 9 to 31 (LCIRVVDSLYGSFLYLPLAILFL). Residues isoleucine 65, arginine 89, and aspartate 115 each coordinate NADP(+). Asparagine 118 is a glycosylation site (N-linked (GlcNAc...) asparagine). NADP(+) is bound by residues asparagine 142 and lysine 164. Catalysis depends on proton donor residues serine 191 and serine 192. Residues tyrosine 223 and lysine 227 each coordinate NADP(+). Tyrosine 223 acts as the Proton acceptor in catalysis. Lysine 227 functions as the Lowers pKa of active site Tyr in the catalytic mechanism. An N-linked (GlcNAc...) asparagine glycan is attached at asparagine 334.

This sequence belongs to the short-chain dehydrogenases/reductases (SDR) family.

The protein resides in the membrane. Its pathway is secondary metabolite biosynthesis; terpenoid biosynthesis. Its function is as follows. Short chain dehydrogenase/reductase; part of the gene cluster that mediates the biosynthesis of diterpenoid pyrones. The first step of the pathway is the synthesis of the alpha-pyrone moiety by the polyketide synthase dpfgA via condensation of one acetyl-CoA starter unit with 3 malonyl-CoA units and 2 methylations. The alpha-pyrone is then combined with geranylgeranyl pyrophosphate (GGPP) formed by the GGPP synthase dpfgD through the action of the prenyltransferase dpfgC to yield a linear alpha-pyrone diterpenoid. Subsequent steps in the diterpenoid pyrone biosynthetic pathway involve the decalin core formation, which is initiated by the epoxidation of the C10-C11 olefin by the FAD-dependent oxidoreductase dpfgE, and is followed by a cyclization cascade catalyzed by the terpene cyclase dpfgB. The short chain dehydrogenase/reductase dpfgG then oxidizes the 8S hydroxy group to a ketone and the short chain dehydrogenase/reductase dpfgH reduces the ketone to the 8R hydroxy group to yield higginsianin B. Higginsianin B is further methylated by the methyltransferase dpfgI to produce the intermediate named FDDP B. The cytochrome P450 monooxygenase dfgpJ then catalyzes a three-step oxidation at C-27 to generate a carboxylic acid as well as C-26 hydroxylation. Finally, methyltransferase dpfgK methylates the carboxylic acid generated by dpfgJ, yielding the final diterpenoid pyrones from the pathway which were named FDDP D and FDDP E. This chain is Short chain dehydrogenase/reductase dpfgH, found in Gibberella zeae (strain ATCC MYA-4620 / CBS 123657 / FGSC 9075 / NRRL 31084 / PH-1) (Wheat head blight fungus).